The following is a 614-amino-acid chain: BTB/POZ domain-containing protein At5g48800 (614 aa).

A BTB domain is found at 43-111; sequence SDITIEVNGG…CYGINFEITS (69 aa). Residues 219–484 enclose the NPH3 domain; it reads DWWIEDLSVL…VQVLYFEQLK (266 aa). A Phosphotyrosine modification is found at Tyr425. Disordered regions lie at residues 492 to 525 and 583 to 614; these read SYSD…KDNY and GHSS…ASTD. The span at 507–521 shows a compositional bias: polar residues; it reads SWRINSGALSATMSP. A coiled-coil region spans residues 522–562; the sequence is KDNYASLRRENRELKLELARLRMRLNDLEKEHICMKRDMQR. Positions 583–597 are enriched in low complexity; that stretch reads GHSSSRGSSSPSKQS.

It belongs to the NPH3 family.

The protein operates within protein modification; protein ubiquitination. Functionally, may act as a substrate-specific adapter of an E3 ubiquitin-protein ligase complex (CUL3-RBX1-BTB) which mediates the ubiquitination and subsequent proteasomal degradation of target proteins. The protein is BTB/POZ domain-containing protein At5g48800 of Arabidopsis thaliana (Mouse-ear cress).